The following is a 381-amino-acid chain: Malonyl-CoA-acyl carrier protein transacylase, mitochondrial (381 aa).

Active-site residues include serine 151 and histidine 268. Lysine 312 is subject to N6-succinyllysine.

This sequence belongs to the type II malonyltransferase family. In terms of tissue distribution, expressed in retinal ganglion cells.

The protein localises to the mitochondrion. The catalysed reaction is holo-[ACP] + malonyl-CoA = malonyl-[ACP] + CoA. The protein operates within lipid metabolism; fatty acid biosynthesis. Catalyzes the transfer of a malonyl moiety from malonyl-CoA to the free thiol group of the phosphopantetheine arm of the mitochondrial ACP protein (NDUFAB1). This suggests the existence of the biosynthesis of fatty acids in mitochondria. The sequence is that of Malonyl-CoA-acyl carrier protein transacylase, mitochondrial from Mus musculus (Mouse).